A 216-amino-acid chain; its full sequence is Pyridoxine/pyridoxamine 5'-phosphate oxidase (216 aa).

FMN-binding positions include 63-68, 78-79, Lys85, and Gln107; these read RMVLMK and YS. Lys68 is a substrate binding site. Substrate-binding residues include Tyr125 and Arg129. FMN is bound by residues 142–143 and Trp187; that span reads QS. Position 193–195 (193–195) interacts with substrate; that stretch reads RLH. An FMN-binding site is contributed by Arg197.

The protein belongs to the pyridoxamine 5'-phosphate oxidase family. In terms of assembly, homodimer. It depends on FMN as a cofactor.

The enzyme catalyses pyridoxamine 5'-phosphate + O2 + H2O = pyridoxal 5'-phosphate + H2O2 + NH4(+). The catalysed reaction is pyridoxine 5'-phosphate + O2 = pyridoxal 5'-phosphate + H2O2. It participates in cofactor metabolism; pyridoxal 5'-phosphate salvage; pyridoxal 5'-phosphate from pyridoxamine 5'-phosphate: step 1/1. It functions in the pathway cofactor metabolism; pyridoxal 5'-phosphate salvage; pyridoxal 5'-phosphate from pyridoxine 5'-phosphate: step 1/1. Its function is as follows. Catalyzes the oxidation of either pyridoxine 5'-phosphate (PNP) or pyridoxamine 5'-phosphate (PMP) into pyridoxal 5'-phosphate (PLP). The chain is Pyridoxine/pyridoxamine 5'-phosphate oxidase from Bradyrhizobium sp. (strain ORS 278).